A 126-amino-acid chain; its full sequence is Holo-[acyl-carrier-protein] synthase (126 aa).

Mg(2+)-binding residues include Asp9 and Glu58.

This sequence belongs to the P-Pant transferase superfamily. AcpS family. Mg(2+) is required as a cofactor.

It is found in the cytoplasm. The catalysed reaction is apo-[ACP] + CoA = holo-[ACP] + adenosine 3',5'-bisphosphate + H(+). Transfers the 4'-phosphopantetheine moiety from coenzyme A to a Ser of acyl-carrier-protein. The protein is Holo-[acyl-carrier-protein] synthase of Erwinia tasmaniensis (strain DSM 17950 / CFBP 7177 / CIP 109463 / NCPPB 4357 / Et1/99).